The chain runs to 409 residues: LL-diaminopimelate aminotransferase (409 aa).

Y15 and G42 together coordinate substrate. Pyridoxal 5'-phosphate is bound by residues Y72, 108 to 109, Y132, N187, Y218, and 246 to 248; these read SK and SFS. Residues K109, Y132, and N187 each coordinate substrate. Residue K249 is modified to N6-(pyridoxal phosphate)lysine. Pyridoxal 5'-phosphate is bound by residues R257 and N292. Positions 292 and 388 each coordinate substrate.

It belongs to the class-I pyridoxal-phosphate-dependent aminotransferase family. LL-diaminopimelate aminotransferase subfamily. As to quaternary structure, homodimer. The cofactor is pyridoxal 5'-phosphate.

It carries out the reaction (2S,6S)-2,6-diaminopimelate + 2-oxoglutarate = (S)-2,3,4,5-tetrahydrodipicolinate + L-glutamate + H2O + H(+). The protein operates within amino-acid biosynthesis; L-lysine biosynthesis via DAP pathway; LL-2,6-diaminopimelate from (S)-tetrahydrodipicolinate (aminotransferase route): step 1/1. In terms of biological role, involved in the synthesis of meso-diaminopimelate (m-DAP or DL-DAP), required for both lysine and peptidoglycan biosynthesis. Catalyzes the direct conversion of tetrahydrodipicolinate to LL-diaminopimelate. The polypeptide is LL-diaminopimelate aminotransferase (Acaryochloris marina (strain MBIC 11017)).